Here is a 421-residue protein sequence, read N- to C-terminus: Histidine--tRNA ligase (421 aa).

The protein belongs to the class-II aminoacyl-tRNA synthetase family. As to quaternary structure, homodimer.

It is found in the cytoplasm. The catalysed reaction is tRNA(His) + L-histidine + ATP = L-histidyl-tRNA(His) + AMP + diphosphate + H(+). This is Histidine--tRNA ligase from Nitrosomonas eutropha (strain DSM 101675 / C91 / Nm57).